A 450-amino-acid polypeptide reads, in one-letter code: Asparagine--tRNA ligase (450 aa).

Belongs to the class-II aminoacyl-tRNA synthetase family. In terms of assembly, homodimer.

It localises to the cytoplasm. The enzyme catalyses tRNA(Asn) + L-asparagine + ATP = L-asparaginyl-tRNA(Asn) + AMP + diphosphate + H(+). This chain is Asparagine--tRNA ligase, found in Metamycoplasma arthritidis (strain 158L3-1) (Mycoplasma arthritidis).